A 517-amino-acid chain; its full sequence is 2-isopropylmalate synthase (517 aa).

The 264-residue stretch at 5-268 (IIIFDTTLRD…DTRINTQEIH (264 aa)) folds into the Pyruvate carboxyltransferase domain. Positions 14, 202, 204, and 238 each coordinate Mn(2+). Residues 393 to 517 (SLDVITSQTI…ADLKSHKISQ (125 aa)) form a regulatory domain region.

Belongs to the alpha-IPM synthase/homocitrate synthase family. LeuA type 1 subfamily. As to quaternary structure, homodimer. Mn(2+) is required as a cofactor.

The protein localises to the cytoplasm. It carries out the reaction 3-methyl-2-oxobutanoate + acetyl-CoA + H2O = (2S)-2-isopropylmalate + CoA + H(+). Its pathway is amino-acid biosynthesis; L-leucine biosynthesis; L-leucine from 3-methyl-2-oxobutanoate: step 1/4. In terms of biological role, catalyzes the condensation of the acetyl group of acetyl-CoA with 3-methyl-2-oxobutanoate (2-ketoisovalerate) to form 3-carboxy-3-hydroxy-4-methylpentanoate (2-isopropylmalate). The sequence is that of 2-isopropylmalate synthase from Histophilus somni (strain 129Pt) (Haemophilus somnus).